Consider the following 291-residue polypeptide: ATP synthase gamma chain (291 aa).

It belongs to the ATPase gamma chain family. As to quaternary structure, F-type ATPases have 2 components, CF(1) - the catalytic core - and CF(0) - the membrane proton channel. CF(1) has five subunits: alpha(3), beta(3), gamma(1), delta(1), epsilon(1). CF(0) has three main subunits: a, b and c.

The protein resides in the cell inner membrane. In terms of biological role, produces ATP from ADP in the presence of a proton gradient across the membrane. The gamma chain is believed to be important in regulating ATPase activity and the flow of protons through the CF(0) complex. This chain is ATP synthase gamma chain, found in Neisseria meningitidis serogroup B (strain ATCC BAA-335 / MC58).